Consider the following 919-residue polypeptide: Synphilin-1 (919 aa).

Disordered stretches follow at residues 80 to 99 (SPLK…DQKN), 108 to 140 (GGES…STSL), and 287 to 313 (SSAA…EERS). Residues 299-308 (SGLNRTSSQG) show a composition bias toward polar residues. 4 ANK repeats span residues 349–380 (NGNN…CLNE), 384–413 (EKLT…AIAE), 419–448 (DFPS…EQGI), and 456–485 (DGNS…NVTM). The stretch at 515 to 552 (CMSLASQVVKLTKQLKEQTVERVTLQNQLQQFLEAQKS) forms a coiled coil. Disordered stretches follow at residues 549–615 (AQKS…KDED), 666–713 (RLRQ…SMDS), and 728–919 (SGGR…NKAA). Positions 555-571 (KSLPSSPSSPSSPASRK) are enriched in low complexity. One copy of the ANK 5 repeat lies at 603–632 (ASSRARPKAKDEDSDKILRQLLGKEISENV). Residues 667–685 (LRQLMQRSLSESDTDSNNS) show a composition bias toward low complexity. Residues 686–700 (EDPKTTPVRKADRPR) are compositionally biased toward basic and acidic residues. The ANK 6 repeat unit spans residues 699–729 (PRPQPIVESVESMDSAESLHLMIKKHTLASG). Positions 774–785 (PSGDPQQPSPDS) are enriched in low complexity. The span at 833-842 (NGEKDKDKGR) shows a compositional bias: basic and acidic residues. The span at 844–854 (LQRTSTSNESG) shows a compositional bias: polar residues. Positions 874 to 886 (NQNNNNNYQAANQ) are enriched in low complexity.

Homodimer. Heterodimer of isoform 1 and isoform 2. Interacts with SIAH1, SIAH2, SNCA, RNF19A and PRKN. Isoform 2 has a strong tendency to form aggregates and can sequester isoform 1. Ubiquitinated; mediated by SIAH1, SIAH2 or RNF19A and leading to its subsequent proteasomal degradation. In the absence of proteasomal degradation, ubiquitinated SNCAIP accumulates in cytoplasmic inclusion bodies. Isoform 2 is subject to limited ubiquitination that does not lead to proteasomal degradation. Detected in brain (at protein level). Widely expressed, with highest levels in brain, heart and placenta.

The protein resides in the cytoplasm. Functionally, isoform 2 inhibits the ubiquitin ligase activity of SIAH1 and inhibits proteasomal degradation of target proteins. Isoform 2 inhibits autoubiquitination and proteasomal degradation of SIAH1, and thereby increases cellular levels of SIAH. Isoform 2 modulates SNCA monoubiquitination by SIAH1. This chain is Synphilin-1 (SNCAIP), found in Homo sapiens (Human).